A 599-amino-acid chain; its full sequence is Translation initiation factor IF-2 (599 aa).

One can recognise a tr-type G domain in the interval 111 to 278 (PRPPIITVMG…SILLLAEILE (168 aa)). The interval 120 to 127 (GHVDHGKT) is G1. 120–127 (GHVDHGKT) is a GTP binding site. The interval 145 to 149 (GITQH) is G2. Positions 166–169 (DTPG) are G3. Residues 166-170 (DTPGH) and 220-223 (NKMD) contribute to the GTP site. The interval 220–223 (NKMD) is G4. A G5 region spans residues 256-258 (SAL).

It belongs to the TRAFAC class translation factor GTPase superfamily. Classic translation factor GTPase family. IF-2 subfamily.

The protein resides in the cytoplasm. In terms of biological role, one of the essential components for the initiation of protein synthesis. Protects formylmethionyl-tRNA from spontaneous hydrolysis and promotes its binding to the 30S ribosomal subunits. Also involved in the hydrolysis of GTP during the formation of the 70S ribosomal complex. In Mesomycoplasma hyopneumoniae (strain 232) (Mycoplasma hyopneumoniae), this protein is Translation initiation factor IF-2.